A 429-amino-acid chain; its full sequence is Phosphoglucosamine mutase (429 aa).

S96 (phosphoserine intermediate) is an active-site residue. Positions 96, 230, 232, and 234 each coordinate Mg(2+). Phosphoserine is present on S96.

The protein belongs to the phosphohexose mutase family. It depends on Mg(2+) as a cofactor. In terms of processing, activated by phosphorylation.

The catalysed reaction is alpha-D-glucosamine 1-phosphate = D-glucosamine 6-phosphate. Catalyzes the conversion of glucosamine-6-phosphate to glucosamine-1-phosphate. The protein is Phosphoglucosamine mutase of Thermotoga petrophila (strain ATCC BAA-488 / DSM 13995 / JCM 10881 / RKU-1).